Consider the following 183-residue polypeptide: Capsid protein (183 aa).

A disordered region spans residues 150–183; that stretch reads RQRGRTIRRRTPSPRRRRSQSPRRRRSQSRESQC. Basic residues predominate over residues 151 to 176; the sequence is QRGRTIRRRTPSPRRRRSQSPRRRRS. Residues 158 to 175 carry the Bipartite nuclear localization signal motif; that stretch reads RRTPSPRRRRSQSPRRRR. A phosphoserine; by host mark is found at Ser-162 and Ser-170. 2 repeat units span residues 162 to 169 and 170 to 177. The tract at residues 162 to 177 is 2 X 8 AA repeats of S-P-R-R-R-[PR]-S-Q; the sequence is SPRRRRSQSPRRRRSQ. The segment at 177-183 is RNA binding; that stretch reads QSRESQC.

It belongs to the orthohepadnavirus core antigen family. In terms of assembly, homodimerizes, then multimerizes. Interacts with cytosol exposed regions of viral L glycoprotein present in the reticulum-to-Golgi compartment. Interacts with human FLNB. Phosphorylated form interacts with host importin alpha; this interaction depends on the exposure of the NLS, which itself depends upon genome maturation and/or phosphorylation of the capsid protein. Interacts with host NUP153. In terms of processing, phosphorylated by host SRPK1, SRPK2, and maybe protein kinase C or GAPDH. Phosphorylation is critical for pregenomic RNA packaging. Protein kinase C phosphorylation is stimulated by HBx protein and may play a role in transport of the viral genome to the nucleus at the late step during the viral replication cycle.

The protein resides in the virion. The protein localises to the host cytoplasm. Functionally, self assembles to form an icosahedral capsid. Most capsids appear to be large particles with an icosahedral symmetry of T=4 and consist of 240 copies of capsid protein, though a fraction forms smaller T=3 particles consisting of 180 capsid proteins. Entering capsids are transported along microtubules to the nucleus. Phosphorylation of the capsid is thought to induce exposure of nuclear localization signal in the C-terminal portion of the capsid protein that allows binding to the nuclear pore complex via the importin (karyopherin-) alpha and beta. Capsids are imported in intact form through the nuclear pore into the nuclear basket, where it probably binds NUP153. Only capsids that contain the mature viral genome can release the viral DNA and capsid protein into the nucleoplasm. Immature capsids get stuck in the basket. Capsids encapsulate the pre-genomic RNA and the P protein. Pre-genomic RNA is reverse-transcribed into DNA while the capsid is still in the cytoplasm. The capsid can then either be directed to the nucleus, providing more genomes for transcription, or bud through the endoplasmic reticulum to provide new virions. This Homo sapiens (Human) protein is Capsid protein.